The primary structure comprises 198 residues: Na(+)-translocating NADH-quinone reductase subunit E (198 aa).

The next 6 membrane-spanning stretches (helical) occupy residues 11-31, 35-55, 77-97, 110-130, 140-160, and 176-196; these read SVFI…FLAV, VSTA…AVPV, FLNF…LEMI, GIFL…SFMV, VVYG…LAGL, and LGIT…FSGI.

This sequence belongs to the NqrDE/RnfAE family. Composed of six subunits; NqrA, NqrB, NqrC, NqrD, NqrE and NqrF.

It is found in the cell inner membrane. The enzyme catalyses a ubiquinone + n Na(+)(in) + NADH + H(+) = a ubiquinol + n Na(+)(out) + NAD(+). NQR complex catalyzes the reduction of ubiquinone-1 to ubiquinol by two successive reactions, coupled with the transport of Na(+) ions from the cytoplasm to the periplasm. NqrA to NqrE are probably involved in the second step, the conversion of ubisemiquinone to ubiquinol. This is Na(+)-translocating NADH-quinone reductase subunit E from Haemophilus ducreyi (strain 35000HP / ATCC 700724).